Reading from the N-terminus, the 3326-residue chain is Protein unc-80 homolog (3326 aa).

Over residues 152–164 (IENQGSPGQPCRS) the composition is skewed to polar residues. Disordered stretches follow at residues 152-178 (IENQ…RKTF), 243-267 (KRSS…QQGE), 283-317 (PKAT…RASL), and 450-469 (RKED…GKRR). Ser257 bears the Phosphoserine mark. Polar residues predominate over residues 283-308 (PKATISGCHQGNSFDGSLSSQTSQER). Ser526 bears the Phosphoserine mark. Disordered regions lie at residues 536-560 (LSAR…SHGE), 697-785 (RKKS…DNIP), 967-1076 (GKKV…SRRI), 1405-1430 (EDSK…KKVP), and 1469-1516 (SSKL…LSNA). Composition is skewed to basic and acidic residues over residues 551 to 560 (LPDHSNSHGE) and 699 to 713 (KSEN…KRPS). The segment covering 723-737 (SSSSTSGFGAPSASG) has biased composition (low complexity). The segment covering 738–770 (AGDGGGEEGGGGDGGGGGGGGDGGGGGGGGGGP) has biased composition (gly residues). Over residues 772–783 (EKNEKNQEKDDN) the composition is skewed to basic and acidic residues. Low complexity predominate over residues 1038-1055 (SQSAASDTSSQSEQDTSE). A compositionally biased stretch (basic and acidic residues) spans 1418-1429 (IKSDAGAEEKKV). 2 helical membrane passes run 2336–2356 (PFVL…DAAN) and 2466–2486 (IAAT…VEVL). The segment at 2493–2515 (PQMSRSDQGHKGTTTANHTMSSG) is disordered. 2 helical membrane passes run 2853–2873 (GLAE…LVCF) and 2899–2919 (LALW…FVLL). The span at 3010-3032 (NTGTGTVWEQDSEPSQQASQDTL) shows a compositional bias: polar residues. Residues 3010-3052 (NTGTGTVWEQDSEPSQQASQDTLSRTDEEDEENDSVSMPSVVS) form a disordered region. Ser3110 carries the phosphoserine modification. 3 disordered regions span residues 3122 to 3222 (LQQP…VLTS), 3236 to 3271 (PKQS…LSDP), and 3296 to 3326 (NGTE…ESHV). The span at 3127-3136 (GRKRGLRQLR) shows a compositional bias: basic residues. The segment covering 3157 to 3168 (LSTTRRSIQPKT) has biased composition (polar residues). The span at 3298–3309 (TENPLLSSQFTF) shows a compositional bias: polar residues. Acidic residues predominate over residues 3315 to 3326 (GDTDSALDESHV).

It belongs to the unc-80 family. In terms of assembly, NALCN complex consists of NALCN and auxiliary subunits, UNC79, UNC80 and NACL1. These auxiliary subunits are essential for the NALCN complex function. Interacts (via N-terminus half) with NALCN; this interaction facilitates NALCN surface localization. Interacts (via C-terminus) with UNC79. UNC80 bridges NALCN to UNC79. Phosphorylated on tyrosine residues. As to expression, expressed almost exclusively in the brain. Expressed in hippocampus and ventral tegmental area neurons.

The protein localises to the cell membrane. Its subcellular location is the cell projection. It is found in the dendrite. In terms of biological role, auxiliary subunit of the NALCN sodium channel complex. The NALCN sodium channel complex is a voltage-gated ion channel responsible for the resting Na(+) permeability that controls neuronal excitability. This complex is activated by neuropeptides substance P, neurotensin. In addition, the channel is inhibited by extracellular Ca(2+) through the Ca(2+)-sensing receptor. UNC80 is essential for NALCN sensitivity to extracellular calcium. The chain is Protein unc-80 homolog (Unc80) from Mus musculus (Mouse).